A 397-amino-acid polypeptide reads, in one-letter code: Class V chitinase CHIT5 (397 aa).

An N-terminal signal peptide occupies residues M1–A18. The 344-residue stretch at G54–Y397 folds into the GH18 domain. 2 N-linked (GlcNAc...) asparagine glycosylation sites follow: N128 and N147. Residue E166 is the Proton donor of the active site. 4 N-linked (GlcNAc...) asparagine glycosylation sites follow: N193, N209, N247, and N261.

This sequence belongs to the glycosyl hydrolase 18 family. Chitinase class V subfamily.

The catalysed reaction is Random endo-hydrolysis of N-acetyl-beta-D-glucosaminide (1-&gt;4)-beta-linkages in chitin and chitodextrins.. It participates in glycan degradation; chitin degradation. Functionally, possesses chitinase activity in vitro toward glycol chitin, carboxymethyl-chitin, colloidal chitin, and the chitin oligosaccharides (N-acetylglucosamine) (GlcNAc)6 and (GlcNAc)5. Hydrolyzes (GlcNAc)6 into (GlcNAc)4 and (GlcNAc)2, or two (GlcNAc)3 molecules. Has the capacity to inhibit hyphal growth of the fungus Trichoderma viride in an agar-plate bioassay. Involved in symbiotic signaling. Required for root hair infection threads (ITs) elongation and nodule development. Possesses Nod factor (NF) hydrolase activity. NFs are lipo-chitooligosaccharide signaling molecules produced by nitrogen-fixing rhizobia to initiate nodulation (symbiosis) on the roots of legumes. Modulates NF levels and signaling to complete transition of infected nodules to functional nitrogen-fixing organs. The sequence is that of Class V chitinase CHIT5 from Lotus japonicus (Lotus corniculatus var. japonicus).